The primary structure comprises 336 residues: MLQSLAGSSCVRLVERHRSAWCFGFLVLGYLLYLVFGAVVFSSVELPYEDLLRQELRKLKRRFVEEHECLSEQQLEQFLGRVLEANNYGVSVRSNASGNWNWDFASALFFASTVLSTTGYGHTVPLSDGGKAFCIIYSVIGIPFTLLFLTAVVQRVTVHVTRRPVLYFHVRWGFSKQVVAIVHAVLLGLITVSCFFFIPAAVFSVLEDDWNFLESFYFCFISLSTIGLGDYVPGEGYNQKFRELYKIGITCYLLLGLIAMLVVLETFCELHELKKFRKMFYVKKDKDEDQVHIIEHDQLSFSSITEQAAGMKEDQKQNEPFVATPSSACADGPANH.

The Cytoplasmic portion of the chain corresponds to 1 to 20 (MLQSLAGSSCVRLVERHRSA). The chain crosses the membrane as a helical span at residues 21 to 41 (WCFGFLVLGYLLYLVFGAVVF). Topologically, residues 42–103 (SSVELPYEDL…SNASGNWNWD (62 aa)) are extracellular. The N-linked (GlcNAc...) asparagine glycan is linked to asparagine 95. An intramembrane region (helical) is located at residues 104-116 (FASALFFASTVLS). An intramembrane segment occupies 117-122 (TTGYGH). Positions 117 to 122 (TTGYGH) are selectivity filter 1. Over 123–132 (TVPLSDGGKA) the chain is Extracellular. Residues 133–156 (FCIIYSVIGIPFTLLFLTAVVQRV) traverse the membrane as a helical segment. At 157-181 (TVHVTRRPVLYFHVRWGFSKQVVAI) the chain is on the cytoplasmic side. Residues 182–202 (VHAVLLGLITVSCFFFIPAAV) traverse the membrane as a helical segment. At 203–211 (FSVLEDDWN) the chain is on the extracellular side. The helical intramembrane region spans 212-224 (FLESFYFCFISLS). The selectivity filter 2 stretch occupies residues 225 to 230 (TIGLGD). The stretch at 225 to 231 (TIGLGDY) is an intramembrane region. At 232–243 (VPGEGYNQKFRE) the chain is on the extracellular side. Residues 244 to 267 (LYKIGITCYLLLGLIAMLVVLETF) traverse the membrane as a helical segment. The Cytoplasmic portion of the chain corresponds to 268 to 336 (CELHELKKFR…SACADGPANH (69 aa)). Residue lysine 274 forms a Glycyl lysine isopeptide (Lys-Gly) (interchain with G-Cter in SUMO) linkage. Residues 293–299 (IIEHDQL) form an important for intracellular retention in recycling endosomes region. The tract at residues 315–336 (QKQNEPFVATPSSACADGPANH) is disordered. At serine 326 the chain carries Phosphoserine.

This sequence belongs to the two pore domain potassium channel (TC 1.A.1.8) family. Homodimer; disulfide-linked. Heterodimer with KCNK2; disulfide-linked. In astrocytes, forms mostly heterodimeric potassium channels with KCNK2, with only a minor proportion of functional channels containing homodimeric KCNK1. Interacts with KCNK3 and KCNK9, forming functional heterodimeric channels. Interacts with GNG4. Identified in a complex with PSD and ARF6; interacts only with PSD that is bound to ARF6. Interacts with UBE2I. Post-translationally, sumoylation is controversial. Sumoylated by UBE2I. Not sumoylated when expressed in xenopus oocytes or mammalian cells. Sumoylation inactivates the channel, but does not interfere with expression at the cell membrane. Sumoylation of a single subunit is sufficient to silence the dimeric channel. Sumoylation of KCNK1 is sufficient to silence heterodimeric channels formed by KCNK1 and KCNK3 or KCNK9. Desumoylated by SENP1; this activates the channel. Desumoylated by SENP1; this strongly increases halothane-mediated activation of heterodimeric channels formed with KCNK9. SENP1 treatment has no effect. Expressed in renal distal tubules, especially in cortical collecting duct and cortical thick ascending limb, with lower levels in the connecting tubule.

It localises to the cell membrane. It is found in the recycling endosome. Its subcellular location is the synaptic cell membrane. The protein localises to the cytoplasmic vesicle. The protein resides in the perikaryon. It localises to the cell projection. It is found in the dendrite. Its subcellular location is the apical cell membrane. It carries out the reaction K(+)(in) = K(+)(out). The catalysed reaction is NH4(+)(in) = NH4(+)(out). The enzyme catalyses Na(+)(in) = Na(+)(out). It catalyses the reaction Rb(+)(in) = Rb(+)(out). It carries out the reaction Cs(+)(in) = Cs(+)(out). The catalysed reaction is Li(+)(in) = Li(+)(out). The enzyme catalyses L-glutamate(out) = L-glutamate(in). It catalyses the reaction chloride(in) = chloride(out). Functionally, ion channel that contributes to passive transmembrane potassium transport and to the regulation of the resting membrane potential in brain astrocytes, but also in kidney and in other tissues. Forms dimeric channels through which potassium ions pass in accordance with their electrochemical gradient. The channel is selective for K(+) ions at physiological potassium concentrations and at neutral pH, but becomes permeable to Na(+) at subphysiological K(+) levels and upon acidification of the extracellular medium. The homodimer has very low potassium channel activity, when expressed in heterologous systems, and can function as weakly inward rectifying potassium channel. Channel activity is modulated by activation of serotonin receptors. Heterodimeric channels containing KCNK1 and KCNK2 have much higher activity, and may represent the predominant form in astrocytes. Heterodimeric channels containing KCNK1 and KCNK3 or KCNK9 have much higher activity. Heterodimeric channels formed by KCNK1 and KCNK9 may contribute to halothane-sensitive currents. Mediates outward rectifying potassium currents in dentate gyrus granule cells and contributes to the regulation of their resting membrane potential. Contributes to the regulation of action potential firing in dentate gyrus granule cells and down-regulates their intrinsic excitability. In astrocytes, the heterodimer formed by KCNK1 and KCNK2 is required for rapid glutamate release in response to activation of G-protein coupled receptors, such as F2R and CNR1. Required for normal ion and water transport in the kidney. Contributes to the regulation of the resting membrane potential of pancreatic beta cells. The low channel activity of homodimeric KCNK1 may be due to sumoylation. The low channel activity may be due to rapid internalization from the cell membrane and retention in recycling endosomes. Permeable to monovalent cations with ion selectivity for K(+) &gt; Rb(+) &gt;&gt; NH4(+) &gt;&gt; Cs(+) = Na(+) = Li(+). The sequence is that of Potassium channel subfamily K member 1 from Oryctolagus cuniculus (Rabbit).